The following is a 1598-amino-acid chain: Fatty acid synthase subunit alpha (1598 aa).

The interval 96-134 is disordered; that stretch reads RTQPHKSSAPQEPVPKAAPKAAPPVPVATAPLPEPGRQV. Over residues 104 to 115 the composition is skewed to low complexity; sequence APQEPVPKAAPK. A Carrier domain is found at 143-221; the sequence is DVPIQSRDVI…QIVSGSTSTT (79 aa). An O-(pantetheine 4'-phosphoryl)serine modification is found at S181. Residues 543-784 are ketoreductase (KR) domain; that stretch reads LKGKTVLLTG…LAALLVNPFA (242 aa). Positions 818–844 are disordered; sequence KQDSTSTPTHQHLPSHHHVDEPEIGKP. Residues 820-829 are compositionally biased toward polar residues; that stretch reads DSTSTPTHQH. One can recognise a Ketosynthase family 3 (KS3) domain in the interval 992 to 1524; it reads HEIVLTRDLA…QKGAQAIIVH (533 aa). Residue C1175 is the For beta-ketoacyl synthase activity of the active site. Residues 1280–1301 form a disordered region; it reads ASDKTGRSVPSPGKGTLTNARE. Residues H1409 and H1450 each act as for beta-ketoacyl synthase activity in the active site.

Belongs to the thiolase-like superfamily. Fungal fatty acid synthetase subunit alpha family. Fatty acid synthase is composed of alpha and beta subunits.

It carries out the reaction acetyl-CoA + n malonyl-CoA + 2n NADPH + 4n H(+) = a long-chain-acyl-CoA + n CoA + n CO2 + 2n NADP(+).. The catalysed reaction is a fatty acyl-[ACP] + malonyl-[ACP] + H(+) = a 3-oxoacyl-[ACP] + holo-[ACP] + CO2. The enzyme catalyses a (3R)-hydroxyacyl-[ACP] + NADP(+) = a 3-oxoacyl-[ACP] + NADPH + H(+). It participates in mycotoxin biosynthesis. Functionally, fatty acid synthase subunit alpha; part of the gene cluster that mediates the biosynthesis of gramillins A and B, bicyclic lipopeptides that induce cell death in maize leaves but not in wheat leaves. The nonribosomal peptide synthetase GRA1 incorporates respectively a glutamic adic (Glu), a leucine (Leu), a serine (Ser), a hydroxyglutamine (HOGln), a 2-amino decanoic acid, and 2 cysteins (CysB and CysA). The biosynthesis of 2-amino decanoic acid incorporated in gramillins could be initiated by a fatty acid synthase composed of the alpha and beta subunits FGSG_00036 and FGSG_11656. The cytochrome P450 monooxygenase FGSG_15680 could hydroxylate the fatty acid chain. Subsequent oxidation to the ketone by the oxidoreductase FGSG_00048 and transamination by aminotransferase FGSG_00049 could form 2-amino-decanoic acid. On the other hand, FGSG_15680 could also be responsible for the HO-modified glutamine at the gamma-position. Whether hydroxylation occurs on the fully assembled product or on the Gln residue prior to assembly into the gramillins requires further proof. The thioredoxin FGSG_00043 could also be required for the disulfide-bond formation between CysA and CysB. The specific involvement of the remaining proteins from the cluster is more difficult to discern, but could have broader regulatory (FGSG_00040 and FGSG_11657) or enzymatic functions (FGSG_00044 and FGSG_00045). The final C-domain of GRA1 does not possess the expected sequence of a termination CT domain, often implicated in macrocyclization and release of a cyclopeptidein fungal NRPs; and the thioesterase FGSG_00047 may act in concert with the terminal C-domain of GRA1 to catalyze the formation of the macrocyclic anhydride and release of the products. The protein is Fatty acid synthase subunit alpha of Gibberella zeae (strain ATCC MYA-4620 / CBS 123657 / FGSC 9075 / NRRL 31084 / PH-1) (Wheat head blight fungus).